Consider the following 61-residue polypeptide: Conotoxin Bt5.1 (61 aa).

The signal sequence occupies residues 1–22; the sequence is MRGLPVFVILLLLIASEPSVDA. A propeptide spanning residues 23–48 is cleaved from the precursor; that stretch reads RPKTKADVPLTSLNDNAKRTLQILRN.

Belongs to the conotoxin T superfamily. In terms of processing, contains 2 disulfide bonds that can be either 'C1-C3, C2-C4' or 'C1-C4, C2-C3', since these disulfide connectivities have been observed for conotoxins with cysteine framework V (for examples, see AC P0DQQ7 and AC P81755). Expressed by the venom duct.

Its subcellular location is the secreted. This chain is Conotoxin Bt5.1, found in Conus betulinus (Beech cone).